The sequence spans 1083 residues: Kinesin-like protein klp-19 (1083 aa).

The 323-residue stretch at 6-328 (SLRVVVRARP…LRYADRAKQI (323 aa)) folds into the Kinesin motor domain. An ATP-binding site is contributed by 85–92 (GQTGSGKT). Positions 408 to 435 (MSALTQKNSRLEEDKAKLQSMLTDVRNT) form a coiled coil. Residues 458–471 (TEESTTLADDDNDE) show a composition bias toward acidic residues. The disordered stretch occupies residues 458–479 (TEESTTLADDDNDETALGGQDD). Residues 487–650 (LPELQAELDD…KSKLQKREND (164 aa)) adopt a coiled-coil conformation. Residues 1044 to 1055 (DDSQPSPSNSTF) are compositionally biased toward polar residues. Residues 1044-1083 (DDSQPSPSNSTFVIGAAPTSEADGVPPIKRKSRRTDLGPL) form a disordered region.

The protein belongs to the TRAFAC class myosin-kinesin ATPase superfamily. Kinesin family. As to expression, expressed in the gonad.

It localises to the nucleus. The protein resides in the nucleoplasm. The protein localises to the cytoplasm. Its subcellular location is the cytoskeleton. It is found in the spindle. It localises to the chromosome. Required for chromosome movement and orientation on spindle poles in mitosis and meiosis. May play a role in early anterior-posterior chromosome movement in mitotic embryos. The protein is Kinesin-like protein klp-19 of Caenorhabditis elegans.